Consider the following 102-residue polypeptide: Small ribosomal subunit protein uS10 (102 aa).

The protein belongs to the universal ribosomal protein uS10 family. Part of the 30S ribosomal subunit.

Functionally, involved in the binding of tRNA to the ribosomes. The sequence is that of Small ribosomal subunit protein uS10 from Thermotoga maritima (strain ATCC 43589 / DSM 3109 / JCM 10099 / NBRC 100826 / MSB8).